The chain runs to 291 residues: Phosphate import ATP-binding protein PstB (291 aa).

In terms of domain architecture, ABC transporter spans 45-286; sequence YSTQNLDLWY…PADKQTEDYI (242 aa). 77-84 contacts ATP; that stretch reads GPSGCGKS.

Belongs to the ABC transporter superfamily. Phosphate importer (TC 3.A.1.7) family. In terms of assembly, the complex is composed of two ATP-binding proteins (PstB), two transmembrane proteins (PstC and PstA) and a solute-binding protein (PstS).

Its subcellular location is the cell membrane. It catalyses the reaction phosphate(out) + ATP + H2O = ADP + 2 phosphate(in) + H(+). Its function is as follows. Part of the ABC transporter complex PstSACB involved in phosphate import. Responsible for energy coupling to the transport system. The sequence is that of Phosphate import ATP-binding protein PstB from Staphylococcus epidermidis (strain ATCC 12228 / FDA PCI 1200).